We begin with the raw amino-acid sequence, 178 residues long: RNA pyrophosphohydrolase (178 aa).

The 154-residue stretch at 18–171 folds into the Nudix hydrolase domain; it reads PYRPCVGLMV…KRKVYEQVVA (154 aa). Residues 59 to 80 carry the Nudix box motif; it reads GGIDKGEDPAQAALRELYEETG.

Belongs to the Nudix hydrolase family. RppH subfamily. A divalent metal cation serves as cofactor.

In terms of biological role, accelerates the degradation of transcripts by removing pyrophosphate from the 5'-end of triphosphorylated RNA, leading to a more labile monophosphorylated state that can stimulate subsequent ribonuclease cleavage. The chain is RNA pyrophosphohydrolase from Brucella abortus (strain 2308).